Reading from the N-terminus, the 502-residue chain is Probable malate:quinone oxidoreductase (502 aa).

It belongs to the MQO family. Requires FAD as cofactor.

It catalyses the reaction (S)-malate + a quinone = a quinol + oxaloacetate. It participates in carbohydrate metabolism; tricarboxylic acid cycle; oxaloacetate from (S)-malate (quinone route): step 1/1. This chain is Probable malate:quinone oxidoreductase, found in Oceanobacillus iheyensis (strain DSM 14371 / CIP 107618 / JCM 11309 / KCTC 3954 / HTE831).